Here is a 159-residue protein sequence, read N- to C-terminus: Cyclic pyranopterin monophosphate synthase (159 aa).

Substrate-binding positions include Leu75–His77 and Met113–Glu114. The active site involves Asp128.

It belongs to the MoaC family. Homohexamer; trimer of dimers.

It catalyses the reaction (8S)-3',8-cyclo-7,8-dihydroguanosine 5'-triphosphate = cyclic pyranopterin phosphate + diphosphate. Its pathway is cofactor biosynthesis; molybdopterin biosynthesis. In terms of biological role, catalyzes the conversion of (8S)-3',8-cyclo-7,8-dihydroguanosine 5'-triphosphate to cyclic pyranopterin monophosphate (cPMP). The polypeptide is Cyclic pyranopterin monophosphate synthase (Vibrio vulnificus (strain YJ016)).